The sequence spans 364 residues: Uroporphyrinogen decarboxylase (364 aa).

Residues 28-32, D78, Y160, T215, and H333 each bind substrate; that span reads RQAGR.

This sequence belongs to the uroporphyrinogen decarboxylase family. Homodimer.

It localises to the cytoplasm. The enzyme catalyses uroporphyrinogen III + 4 H(+) = coproporphyrinogen III + 4 CO2. It functions in the pathway porphyrin-containing compound metabolism; protoporphyrin-IX biosynthesis; coproporphyrinogen-III from 5-aminolevulinate: step 4/4. Catalyzes the decarboxylation of four acetate groups of uroporphyrinogen-III to yield coproporphyrinogen-III. This Burkholderia mallei (strain NCTC 10247) protein is Uroporphyrinogen decarboxylase.